Reading from the N-terminus, the 252-residue chain is Large ribosomal subunit protein uL29m (252 aa).

The transit peptide at 1–39 (MSTSTVIRPVARSLLQLRKAGNTPPAFLLPCLQSSSTTS) directs the protein to the mitochondrion. A compositionally biased stretch (acidic residues) spans 233-242 (EDVLAEAEGE). The disordered stretch occupies residues 233–252 (EDVLAEAEGEAEPKPAQVTA).

It belongs to the universal ribosomal protein uL29 family. As to quaternary structure, component of the mitochondrial large ribosomal subunit. Mature mitochondrial ribosomes consist of a small (37S) and a large (54S) subunit. The 37S subunit contains at least 33 different proteins and 1 molecule of RNA (15S). The 54S subunit contains at least 45 different proteins and 1 molecule of RNA (21S).

It localises to the mitochondrion. This chain is Large ribosomal subunit protein uL29m (mrpl4), found in Botryotinia fuckeliana (strain B05.10) (Noble rot fungus).